A 327-amino-acid polypeptide reads, in one-letter code: Malate dehydrogenase (327 aa).

Residue 12-18 (GAAGQIG) coordinates NAD(+). Residues Arg93 and Arg99 each contribute to the substrate site. NAD(+) is bound by residues Asn106, Gln113, and 130–132 (VGN). Substrate is bound by residues Asn132 and Arg163. Catalysis depends on His188, which acts as the Proton acceptor.

This sequence belongs to the LDH/MDH superfamily. MDH type 2 family.

The enzyme catalyses (S)-malate + NAD(+) = oxaloacetate + NADH + H(+). Its function is as follows. Catalyzes the reversible oxidation of malate to oxaloacetate. The polypeptide is Malate dehydrogenase (Cupriavidus pinatubonensis (strain JMP 134 / LMG 1197) (Cupriavidus necator (strain JMP 134))).